The sequence spans 120 residues: Protein crumbs homolog 3 (120 aa).

Positions 1-26 (MANPGLGLLLALGLPFLLARWGRAWG) are cleaved as a signal peptide. Residues 27–59 (QIQTTSANENSTVLPSSTSSSSDGNLRPEAITA) lie on the Extracellular side of the membrane. A glycan (N-linked (GlcNAc...) asparagine) is linked at Asn-36. The helical transmembrane segment at 60–80 (IIVVFSLLAALLLAVGLALLV) threads the bilayer. The Cytoplasmic portion of the chain corresponds to 81 to 120 (RKLREKRQTEGTYRPSSEEQVGARVPPTPNLKLPPEERLI). The interval 84-120 (REKRQTEGTYRPSSEEQVGARVPPTPNLKLPPEERLI) is interaction with EPB41L5. Residues 87-120 (RQTEGTYRPSSEEQVGARVPPTPNLKLPPEERLI) form a disordered region. Residues 90–99 (EGTYRPSSEE) show a composition bias toward polar residues. A PDZ-binding motif is present at residues 117-120 (ERLI).

Component of a complex composed of CRB3, PALS1 and PATJ. Interacts (via C-terminus) with PALS1 (via PDZ domain). Interacts with PARD6A. Interacts (via intracellular domain) with EPB41L5. Interacts with WDR83. In terms of tissue distribution, preferentially expressed in epithelial tissues. Expressed at high levels in lung, kidney, and colon. Expressed at high levels in retina, colon and mammary glands. Moderately expressed in liver, spleen, pancreas and prostate. Moderately to weakly expressed in the placenta. Weakly expressed in skeletal muscle and small intestine.

It is found in the apical cell membrane. The protein localises to the cell junction. The protein resides in the tight junction. Involved in the establishment of cell polarity in mammalian epithelial cells. Regulates the morphogenesis of tight junctions. Involved in promoting phosphorylation and cytoplasmic retention of transcriptional coactivators YAP1 and WWTR1/TAZ which leads to suppression of TGFB1-dependent transcription of target genes such as CCN2/CTGF, SERPINE1/PAI1, SNAI1/SNAIL1 and SMAD7. The chain is Protein crumbs homolog 3 from Homo sapiens (Human).